The following is a 150-amino-acid chain: UPF0178 protein PC1_0756 (150 aa).

It belongs to the UPF0178 family.

The chain is UPF0178 protein PC1_0756 from Pectobacterium carotovorum subsp. carotovorum (strain PC1).